Here is an 867-residue protein sequence, read N- to C-terminus: Leucine--tRNA ligase (867 aa).

The 'HIGH' region motif lies at 42–52 (PYPSGNLHMGH). The 'KMSKS' region signature appears at 625–629 (KMSKS). Residue Lys-628 participates in ATP binding.

This sequence belongs to the class-I aminoacyl-tRNA synthetase family.

The protein localises to the cytoplasm. It carries out the reaction tRNA(Leu) + L-leucine + ATP = L-leucyl-tRNA(Leu) + AMP + diphosphate. In Blochmanniella floridana, this protein is Leucine--tRNA ligase.